A 442-amino-acid polypeptide reads, in one-letter code: QWRF motif-containing protein 6 (442 aa).

2 disordered regions span residues 1–144 and 221–240; these read MEAK…LSQQ and FSRL…ADTK. Basic residues predominate over residues 57-66; the sequence is KQHHLQHHQI. A compositionally biased stretch (basic and acidic residues) spans 80 to 89; the sequence is KMADGDENRS. The short motif at 264 to 267 is the QWRF motif element; it reads QWRF.

The protein belongs to the QWRF family.

In Arabidopsis thaliana (Mouse-ear cress), this protein is QWRF motif-containing protein 6 (QWRF6).